The sequence spans 427 residues: Gamma-glutamyl phosphate reductase (427 aa).

It belongs to the gamma-glutamyl phosphate reductase family.

Its subcellular location is the cytoplasm. It catalyses the reaction L-glutamate 5-semialdehyde + phosphate + NADP(+) = L-glutamyl 5-phosphate + NADPH + H(+). Its pathway is amino-acid biosynthesis; L-proline biosynthesis; L-glutamate 5-semialdehyde from L-glutamate: step 2/2. In terms of biological role, catalyzes the NADPH-dependent reduction of L-glutamate 5-phosphate into L-glutamate 5-semialdehyde and phosphate. The product spontaneously undergoes cyclization to form 1-pyrroline-5-carboxylate. This chain is Gamma-glutamyl phosphate reductase, found in Brucella canis (strain ATCC 23365 / NCTC 10854 / RM-666).